Reading from the N-terminus, the 185-residue chain is Hypoxanthine/guanine phosphoribosyltransferase (185 aa).

This sequence belongs to the purine/pyrimidine phosphoribosyltransferase family. Archaeal HPRT subfamily. Homodimer.

It is found in the cytoplasm. It catalyses the reaction IMP + diphosphate = hypoxanthine + 5-phospho-alpha-D-ribose 1-diphosphate. It carries out the reaction GMP + diphosphate = guanine + 5-phospho-alpha-D-ribose 1-diphosphate. The protein operates within purine metabolism; IMP biosynthesis via salvage pathway; IMP from hypoxanthine: step 1/1. Catalyzes a salvage reaction resulting in the formation of IMP that is energically less costly than de novo synthesis. This chain is Hypoxanthine/guanine phosphoribosyltransferase (hpt), found in Methanococcus maripaludis (strain DSM 14266 / JCM 13030 / NBRC 101832 / S2 / LL).